Consider the following 601-residue polypeptide: MRAVHLLALGAGLAAASPALANESVLKGVANPAEQVLQTVDYANTRYSKLDQINASNVKNLQVAWTFSTGVLRGHEGSPLVVGNIMYVHTPFPNIVYALDLDQGAKIVWKYEPKQDPSVIPVMCCDTVNRGLAYADGAILLHQADTTLVSLDAKSGKVNWSVKNGDPSKGETNTATVLPVKDKVIVGISGGEFGVQCHVTAYDLKSGKKVWRGYSIGPDDQLIVDPEKTTSLGKPIGKDSSLKTWEGDQWKTGGGCTWGWFSYDPKLDLMYYGSGNPSTWNPKQRPGDNKWSMTIWARNPDTGMAKWVYQMTPHDEWDFDGINEMILTDQKFDGKDRPLLTHFDRNGFGYTLDRATGEVLVAEKFDPVVNWATKVDLDKGSKTYGRPLVVSKYSTEQNGEDVNSKGICPAALGTKDQQPAAFSPKTGLFYVPTNHVCMDYEPFRVTYTPGQPYVGATLSMYPAPGSHGGMGNFIAWDNLQGKIKWSNPEQFSAWGGALATAGDVVFYGTLEGFLKAVDSKTGKELYKFKTPSGIIGNVMTYEHKGKQHVAVLSGVGGWAGIGLAAGLTDPNAGLGAVGGYAALSSYTNLGGQLTVFSLPNN.

The N-terminal stretch at 1–21 (MRAVHLLALGAGLAAASPALA) is a signal peptide. Cysteine 124 and cysteine 125 are disulfide-bonded. Pyrroloquinoline quinone contacts are provided by arginine 130, threonine 174, serine 189, glycine 190, and glycine 191. A La(3+)-binding site is contributed by glutamate 192. Cysteines 197 and 256 form a disulfide. Tryptophan 258 contributes to the pyrroloquinoline quinone binding site. Residues asparagine 276, aspartate 318, and aspartate 320 each contribute to the La(3+) site. Aspartate 318 (proton acceptor) is an active-site residue. Arginine 345 contributes to the pyrroloquinoline quinone binding site. Cysteine 408 and cysteine 437 form a disulfide bridge. Residues tryptophan 494 and tryptophan 558 each contribute to the pyrroloquinoline quinone site.

This sequence belongs to the bacterial PQQ dehydrogenase family. Homodimer. La(3+) is required as a cofactor. Requires Nd(3+) as cofactor. The cofactor is pyrroloquinoline quinone.

The protein resides in the periplasm. The catalysed reaction is 2 Fe(III)-[cytochrome cL] + methanol = 2 Fe(II)-[cytochrome cL] + formaldehyde + 2 H(+). In terms of biological role, catalyzes the oxidation of methanol to formaldehyde, but only in the presence of lanthanides (Ln). Contributes to methanol metabolism when La(3+) is present in the natural environment of the bacterium, allowing bacterial growth with methanol as carbon and energy source. Thereby is an essential enzyme for Ln-dependent methylotrophy. Uses a specific cytochrome cL (XoxG), encoded by the adjacent gene in the locus, as electron acceptor. Also plays a role in the transcriptional regulation of the mxa and xox1 operons, most likely acting as a lanthanide sensory module. Is also able to oxidize formaldehyde to formate in vitro, but this activity does not occur in vivo. This is Lanthanide-dependent methanol dehydrogenase from Methylorubrum extorquens (strain ATCC 14718 / DSM 1338 / JCM 2805 / NCIMB 9133 / AM1) (Methylobacterium extorquens).